We begin with the raw amino-acid sequence, 206 residues long: Large ribosomal subunit protein uL3 (206 aa).

The segment at 127–151 (SGGPSSHGSKFHRHLGGTGQATTPA) is disordered.

It belongs to the universal ribosomal protein uL3 family. As to quaternary structure, part of the 50S ribosomal subunit. Forms a cluster with proteins L14 and L19.

Functionally, one of the primary rRNA binding proteins, it binds directly near the 3'-end of the 23S rRNA, where it nucleates assembly of the 50S subunit. In Borreliella burgdorferi (strain ZS7) (Borrelia burgdorferi), this protein is Large ribosomal subunit protein uL3.